We begin with the raw amino-acid sequence, 396 residues long: 1-deoxy-D-xylulose 5-phosphate reductoisomerase (396 aa).

NADPH-binding residues include threonine 13, glycine 14, serine 15, isoleucine 16, and asparagine 127. Lysine 128 lines the 1-deoxy-D-xylulose 5-phosphate pocket. Glutamate 129 contributes to the NADPH binding site. Aspartate 153 is a Mn(2+) binding site. 1-deoxy-D-xylulose 5-phosphate contacts are provided by serine 154, glutamate 155, serine 184, and histidine 207. Glutamate 155 is a binding site for Mn(2+). Glycine 213 is an NADPH binding site. Positions 220, 225, 226, and 229 each coordinate 1-deoxy-D-xylulose 5-phosphate. Residue glutamate 229 participates in Mn(2+) binding.

It belongs to the DXR family. Mg(2+) is required as a cofactor. Mn(2+) serves as cofactor.

The catalysed reaction is 2-C-methyl-D-erythritol 4-phosphate + NADP(+) = 1-deoxy-D-xylulose 5-phosphate + NADPH + H(+). Its pathway is isoprenoid biosynthesis; isopentenyl diphosphate biosynthesis via DXP pathway; isopentenyl diphosphate from 1-deoxy-D-xylulose 5-phosphate: step 1/6. Its function is as follows. Catalyzes the NADPH-dependent rearrangement and reduction of 1-deoxy-D-xylulose-5-phosphate (DXP) to 2-C-methyl-D-erythritol 4-phosphate (MEP). This chain is 1-deoxy-D-xylulose 5-phosphate reductoisomerase, found in Pseudomonas syringae pv. syringae (strain B728a).